A 463-amino-acid polypeptide reads, in one-letter code: 4-hydroxybenzoate polyprenyltransferase, mitochondrial (463 aa).

2 disordered regions span residues Asn-28–Asn-48 and Leu-133–Pro-152. Residues Asn-137–Asn-150 are compositionally biased toward low complexity. 7 helical membrane-spanning segments follow: residues Ile-181 to Gly-201, Leu-206 to Ile-226, Leu-257 to Tyr-277, Phe-305 to Ser-325, Ile-330 to Ala-350, Ile-375 to Ala-395, and Phe-431 to Leu-451.

Belongs to the UbiA prenyltransferase family. Mg(2+) is required as a cofactor.

It is found in the mitochondrion inner membrane. The enzyme catalyses an all-trans-polyprenyl diphosphate + 4-hydroxybenzoate = a 4-hydroxy-3-(all-trans-polyprenyl)benzoate + diphosphate. Its pathway is cofactor biosynthesis; ubiquinone biosynthesis. Catalyzes the prenylation of para-hydroxybenzoate (PHB) with an all-trans polyprenyl group. Mediates the second step in the final reaction sequence of coenzyme Q (CoQ) biosynthesis, which is the condensation of the polyisoprenoid side chain with PHB. Its function is as follows. Catalyzes the prenylation of para-hydroxybenzoate (PHB) with an all-trans polyprenyl group. Mediates the second step in the final reaction sequence of coenzyme Q (CoQ) biosynthesis, which is the condensation of the polyisoprenoid side chain with PHB, generating the first membrane-bound Q intermediate. In Dictyostelium discoideum (Social amoeba), this protein is 4-hydroxybenzoate polyprenyltransferase, mitochondrial.